A 973-amino-acid chain; its full sequence is NLR family member X1 (973 aa).

The N-terminal 84 residues, 1–84 (MRWGCHLPRT…EAIQRHRRNL (84 aa)), are a transit peptide targeting the mitochondrion. The tract at residues 73–554 (ATEAIQRHRR…RILPLLFNLL (482 aa)) is required for interaction with MAVS. One can recognise an NACHT domain in the interval 158–481 (QTVVLYGTVG…LRFFLAPCVE (324 aa)). An ATP-binding site is contributed by 164–171 (GTVGTGKS). The tract at residues 554-972 (LKVVPRVFGR…TLLEQLGGSG (419 aa)) is required for the repression of MAVS-induced interferon signaling. The LRRNT domain occupies 665–692 (RQVLPPSELLDHLFFHYEFQNQRFSAEV). LRR repeat units follow at residues 693-716 (LGSL…VVAS), 722-745 (RHPL…TLMP), 747-775 (LLRA…LLHD), 776-799 (QCQI…VLMD), 809-832 (HLSL…LDRN), 833-855 (KQLQ…ALAK), 856-875 (AARK…ELSS), and 876-897 (EGRQ…VVAS). In terms of domain architecture, LRRCT spans 904–968 (VSEYWSVILS…SEVKTLLEQL (65 aa)).

Belongs to the NLRP family. Homohexamer. Interacts with MAVS. Interacts with TUFM.

Its subcellular location is the mitochondrion outer membrane. In terms of biological role, participates in antiviral signaling. Acts as a negative regulator of MAVS-mediated antiviral responses, through the inhibition of the virus-induced RLH (RIG-like helicase)-MAVS interaction. Instead, promotes autophagy by interacting with TUFM and subsequently recruiting the autophagy-related proteins ATG5 and ATG12. Also regulates MAVS-dependent NLRP3 inflammasome activation to attenuate apoptosis. Has no inhibitory function on NF-kappa-B signaling pathway, but enhances NF-kappa-B and JUN N-terminal kinase dependent signaling through the production of reactive oxygen species. Regulates viral mediated-inflammation and energy metabolism in a sex-dependent manner. In females, prevents uncontrolled inflammation and energy metabolism and thus, may contribute to the sex differences observed in infectious and inflammatory diseases. In Rattus norvegicus (Rat), this protein is NLR family member X1 (Nlrx1).